Here is a 549-residue protein sequence, read N- to C-terminus: Probable amidase (549 aa).

Active-site charge relay system residues include Lys-132 and Ser-209. Residue Ser-233 is the Acyl-ester intermediate of the active site.

Belongs to the amidase family.

It carries out the reaction a monocarboxylic acid amide + H2O = a monocarboxylate + NH4(+). The polypeptide is Probable amidase (AMD2) (Saccharomyces cerevisiae (strain ATCC 204508 / S288c) (Baker's yeast)).